Consider the following 180-residue polypeptide: uncharacterized protein (180 aa).

Positions 1–31 (MSTYEEEHGIQQNSRDYQEVGGTSQEEQRRQ) are disordered. At Ser2 the chain carries N-acetylserine. The segment at 109–153 (CSICYTNYLEDEYPLVVELPHCHHKFDLECLSVWLSRSTTCPLCR) adopts an RING-type zinc-finger fold.

This is an uncharacterized protein from Saccharomyces cerevisiae (strain ATCC 204508 / S288c) (Baker's yeast).